The chain runs to 764 residues: Complement factor B (764 aa).

An N-terminal signal peptide occupies residues 1–25 (MGSNLSPQLCLMPFILGLLSGGVTT). Sushi domains are found at residues 35–100 (GSCS…ECRA), 101–160 (IHCP…ICDN), and 163–220 (GYCS…SCQD). Intrachain disulfides connect cysteine 37–cysteine 76, cysteine 62–cysteine 98, cysteine 103–cysteine 145, cysteine 131–cysteine 158, cysteine 165–cysteine 205, and cysteine 191–cysteine 218. 2 N-linked (GlcNAc...) asparagine glycosylation sites follow: asparagine 122 and asparagine 142. In terms of domain architecture, VWFA spans 270 to 469 (NIYLVLDGSD…NLEDVFYQMI (200 aa)). Residues serine 278 and serine 280 each coordinate Mg(2+). The N-linked (GlcNAc...) asparagine glycan is linked to asparagine 285. Threonine 353 lines the Mg(2+) pocket. Asparagine 378 carries N-linked (GlcNAc...) asparagine glycosylation. Positions 477-757 (LCGMVWEHRK…VLPWLKEKLQ (281 aa)) constitute a Peptidase S1 domain. 5 disulfide bridges follow: cysteine 478/cysteine 596, cysteine 511/cysteine 527, cysteine 599/cysteine 615, cysteine 656/cysteine 682, and cysteine 695/cysteine 725. Residues histidine 526 and aspartate 576 each act as charge relay system in the active site. The Charge relay system role is filled by serine 699.

This sequence belongs to the peptidase S1 family. In terms of assembly, monomer. Interacts with complement C3b; this interaction is dependent on the presence of Mg(2+). Catalytic component of the C3 convertase of the alternative complement pathway, also named C3bBb, composed of complement factor B Bb and complement C3b. Catalytic component of the C5 convertase of the alternative complement pathway, also named C3bBb3b, composed of complement factor B Bb and additional molecules of complement C3b. Interacts to CFP; this interaction contributes to the stabilization of the active C3-convertase enzyme complex. Mg(2+) serves as cofactor. It depends on Mn(2+) as a cofactor. Cleaved by CFD following activation of the alternative complement system, generating Ba and Bb chains. Cleavage and activation takes place when CFB is already associated with complement C3b.

It localises to the secreted. It is found in the cell surface. The enzyme catalyses Cleavage of Arg-|-Ser bond in complement component C3 alpha-chain to yield C3a and C3b, and Arg-|-Xaa bond in complement component C5 alpha-chain to yield C5a and C5b.. Functionally, precursor of the catalytic component of the C3 and C5 convertase complexes of the alternative pathway of the complement system, a cascade of proteins that leads to phagocytosis and breakdown of pathogens and signaling that strengthens the adaptive immune system. The alternative complement pathway acts as an amplification loop that enhances other complement pathways (classical, lectin and GZMK) by promoting formation of additional C3 and C5 convertases. CFB is cleaved and activated by CFD to generate Ba and Bb chains; Bb chain constituting the catalytic component of the C3 and C5 convertases. In terms of biological role, serine protease component of the complement C3 and C5 convertase complexes of the alternative complement pathway. Following cleavage and activation by factor D (CFD), forms the C3 convertase together with complement C3b. As part of the C3 convertase, cleaves and activates C3 into C3a anaphylatoxin and C3b opsonin, the next components of the complement pathways. When an additional complement C3b molecule binds to the C3 convertase, forms the C5 convertase, which cleaves and activates C5 into C5a anaphylatoxin and C5b component of the membrane attack complex. Its function is as follows. Involved in proliferation and differentiation of preactivated B-lymphocytes, rapid spreading of peripheral blood monocytes, stimulation of lymphocyte blastogenesis and lysis of erythrocytes. The chain is Complement factor B (CFB) from Gorilla gorilla gorilla (Western lowland gorilla).